The following is a 244-amino-acid chain: Large ribosomal subunit protein uL30w (244 aa).

The protein belongs to the universal ribosomal protein uL30 family.

The protein is Large ribosomal subunit protein uL30w (RPL7D) of Arabidopsis thaliana (Mouse-ear cress).